Reading from the N-terminus, the 300-residue chain is MLPLAFLICSGHNKGSMARAKAKDQTDGIYAAFDTLMSTAGVDSQIAALAASEADAGTLDAALTQSLQEAQGRWGLGLHHLRHEARLTDDGDIEILTDGRPSARVSEGFGALAQAYAPMQALDERGLSQWAALGEGYRAPGDLPLAQLKVLIEHARDFETDWSAGRGETFQRVWRKGDTLFVEVARPASAEAALSDAAWDVIASIKDRAFQRELMRRSEKDGMLGALLGARHAGAKANLAQLPEAHFTVQAFVQTLSGAAARNAEEYRAALKTAAAALEEYQGVTTRQLSEVLRHGLRES.

The residue at position 88 (Thr-88) is a Phosphothreonine. At Ser-128 the chain carries Phosphoserine. Phosphothreonine is present on Thr-160.

In terms of processing, phosphorylated by RqkA in vitro. Phosphorylated primarily at Thr-88, and to a little extent at Ser-128 and Thr-160.

Phosphorylation increases DNA binding affinity. Functionally, dsDNA-binding protein that contributes to the ionizing radiation resistance of D.radiodurans. Plays a role in DNA repair and genome reconstitution, and is necessary for recovery from severe genomic fragmentation as a result of exposure to severe levels of ionizing radiation. In vitro, binds to double-stranded DNA carrying strand breaks and stimulates the DNA end-joining reaction catalyzed by DNA ligases. Thus, PprA plays a critical role in a non-homologous end-joining (NHEJ) pathway for the repair of radiation-induced DNA double-strands breaks. Cannot bind to dsDNA without strand breaks or single-stranded DNA. The polypeptide is DNA repair protein PprA (pprA) (Deinococcus radiodurans (strain ATCC 13939 / DSM 20539 / JCM 16871 / CCUG 27074 / LMG 4051 / NBRC 15346 / NCIMB 9279 / VKM B-1422 / R1)).